The chain runs to 507 residues: Phosphoprotein (507 aa).

A disordered region spans residues 56 to 79 (DHQDISKPCFPAAGPGKSSMSRCH). 2 positions are modified to phosphoserine: serine 86 and serine 151. The segment covering 137–160 (DGVEVWGGDEESENSDVDSGEPDP) has biased composition (acidic residues). The tract at residues 137–307 (DGVEVWGGDE…QSNIEPEDDY (171 aa)) is disordered. Basic and acidic residues-rich tracts occupy residues 189-199 (EIQKLLEDQSR) and 222-233 (TASEKPIKKGTD). 2 stretches are compositionally biased toward low complexity: residues 236 to 252 (STSS…GGAT) and 266 to 278 (NASA…SASN). Over residues 279–301 (VSPTQGSKTESGTTTSRISQSNI) the composition is skewed to polar residues. A multimerization region spans residues 304–376 (EDDYDDELFS…LSSFMIAIPG (73 aa)). The tract at residues 459–507 (ASRSVIRSIIKSSHLGEDRKDYLMSLLNDIQGSKDLAQFHQMLVKILKN) is interaction with the nucleocapsid (N-RNA).

The protein belongs to the morbillivirus P protein family. As to quaternary structure, homotetramer. Interacts (via multimerization domain) with polymerase L; this interaction forms the polymerase L-P complex. Interacts (via N-terminus) with N0 (via Ncore); this interaction allows P to chaperon N0 to avoid N polymerization before encapsidation. Interacts (via C-terminus) with N-RNA template; this interaction positions the polymerase on the template for both transcription and replication. Post-translationally, phosphorylation on serines by host CK2 is necessary for the formation of viral factories.

Functionally, essential cofactor of the RNA polymerase L that plays a central role in the transcription and replication by forming the polymerase complex with RNA polymerase L and recruiting L to the genomic N-RNA template for RNA synthesis. Also plays a central role in the encapsidation of nascent RNA chains by forming the encapsidation complex with the nucleocapsid protein N (N-P complex). Acts as a chaperone for newly synthesized free N protein, so-called N0, allowing encapsidation of nascent RNA chains during replication. The nucleoprotein protein N prevents excessive phosphorylation of P, which leads to down-regulation of viral transcription/ replication. Participates, together with N, in the formation of viral factories (viroplasms), which are large inclusions in the host cytoplasm where replication takes place. This chain is Phosphoprotein (P/V), found in Bos indicus (Zebu).